The primary structure comprises 374 residues: Glutamate 5-kinase (374 aa).

Lys-8 contacts ATP. Substrate is bound by residues Ser-49, Asp-136, and Asn-148. ATP is bound by residues 168 to 169 and 211 to 217; these read TD and TGGMQTK. One can recognise a PUA domain in the interval 276–354; the sequence is QGILTLDDGA…TQIRQILGYG (79 aa).

Belongs to the glutamate 5-kinase family.

Its subcellular location is the cytoplasm. It carries out the reaction L-glutamate + ATP = L-glutamyl 5-phosphate + ADP. It participates in amino-acid biosynthesis; L-proline biosynthesis; L-glutamate 5-semialdehyde from L-glutamate: step 1/2. In terms of biological role, catalyzes the transfer of a phosphate group to glutamate to form L-glutamate 5-phosphate. This chain is Glutamate 5-kinase, found in Picosynechococcus sp. (strain ATCC 27264 / PCC 7002 / PR-6) (Agmenellum quadruplicatum).